Here is a 470-residue protein sequence, read N- to C-terminus: Uronate isomerase (470 aa).

This sequence belongs to the metallo-dependent hydrolases superfamily. Uronate isomerase family.

The enzyme catalyses D-glucuronate = D-fructuronate. The catalysed reaction is aldehydo-D-galacturonate = keto-D-tagaturonate. It functions in the pathway carbohydrate metabolism; pentose and glucuronate interconversion. The chain is Uronate isomerase from Cronobacter sakazakii (strain ATCC BAA-894) (Enterobacter sakazakii).